The primary structure comprises 469 residues: Glutamine synthetase (469 aa).

The GS beta-grasp domain maps to 14–99 (NDVKFVDLRF…FCDILDPVSG (86 aa)). Residues 106–469 (PRGTAKKAEA…PVEFDMYYSV (364 aa)) enclose the GS catalytic domain. Residues E131 and E133 each contribute to the Mg(2+) site. E209 is an ATP binding site. Mg(2+) contacts are provided by E214 and E221. Residues 265–266 (NG) and G266 contribute to the L-glutamate site. Mg(2+) is bound at residue H270. ATP contacts are provided by residues 272–274 (HLS) and S274. L-glutamate contacts are provided by R322, E328, and R340. Residues R340, R345, and K353 each contribute to the ATP site. E358 is a binding site for Mg(2+). R360 is an L-glutamate binding site. Y398 carries the O-AMP-tyrosine modification.

It belongs to the glutamine synthetase family. Oligomer of 12 subunits arranged in the form of two hexameric ring. Requires Mg(2+) as cofactor.

It is found in the cytoplasm. The catalysed reaction is L-glutamate + NH4(+) + ATP = L-glutamine + ADP + phosphate + H(+). Its activity is regulated as follows. The activity of this enzyme could be controlled by adenylation under conditions of abundant glutamine. Functionally, catalyzes the ATP-dependent biosynthesis of glutamine from glutamate and ammonia. This chain is Glutamine synthetase, found in Rhizobium meliloti (strain 1021) (Ensifer meliloti).